We begin with the raw amino-acid sequence, 213 residues long: Kynurenine formamidase (213 aa).

Trp-18 is a binding site for substrate. His-48, His-52, and Asp-54 together coordinate Zn(2+). The active-site Proton donor/acceptor is the His-58. Residues His-160 and Glu-172 each contribute to the Zn(2+) site.

It belongs to the Cyclase 1 superfamily. KynB family. As to quaternary structure, homodimer. Zn(2+) serves as cofactor.

It catalyses the reaction N-formyl-L-kynurenine + H2O = L-kynurenine + formate + H(+). The protein operates within amino-acid degradation; L-tryptophan degradation via kynurenine pathway; L-kynurenine from L-tryptophan: step 2/2. In terms of biological role, catalyzes the hydrolysis of N-formyl-L-kynurenine to L-kynurenine, the second step in the kynurenine pathway of tryptophan degradation. This is Kynurenine formamidase from Burkholderia orbicola (strain MC0-3).